The primary structure comprises 264 residues: Tetraspanin-12 (264 aa).

At 1–13 (MLRLSNAAVITTN) the chain is on the cytoplasmic side. A helical membrane pass occupies residues 14 to 34 (AILALIGLAALSFSVYVYVQG). The Extracellular segment spans residues 35 to 45 (PSQCQRFVQNP). Residues 46 to 66 (LIVTAALLFFISSLGLIAALY) traverse the membrane as a helical segment. Residues 67–75 (GSHIIITLY) are Cytoplasmic-facing. A helical transmembrane segment spans residues 76–96 (LFFLFLSILLLLVLSVFIFLV). Topologically, residues 97–228 (TNPTAGKALS…VLKGIRKRWR (132 aa)) are extracellular. A glycan (N-linked (GlcNAc...) asparagine) is linked at Asn-180. Residues 229–249 (ILIVVNLLLILLVVFLYSCGC) form a helical membrane-spanning segment. Residues 250-264 (CVRKNNRVPWKRRFF) are Cytoplasmic-facing.

Belongs to the tetraspanin (TM4SF) family.

Its subcellular location is the membrane. Its function is as follows. May be involved in the regulation of cell differentiation. In Arabidopsis thaliana (Mouse-ear cress), this protein is Tetraspanin-12 (TET12).